The primary structure comprises 181 residues: Adenylate kinase (181 aa).

10 to 15 (GAGKGT) is a binding site for ATP. Residues 30 to 59 (STGDLFRANIGQATALGVEAKKYIDAGELV) form an NMP region. Residues Thr31, Arg36, 57 to 59 (ELV), 85 to 88 (GFPR), and Gln92 contribute to the AMP site. Residues 126 to 132 (ARGRADD) form an LID region. ATP is bound at residue Arg127. Residues Arg129 and Arg140 each coordinate AMP. Position 166 (Gly166) interacts with ATP.

This sequence belongs to the adenylate kinase family. In terms of assembly, monomer.

Its subcellular location is the cytoplasm. It carries out the reaction AMP + ATP = 2 ADP. It functions in the pathway purine metabolism; AMP biosynthesis via salvage pathway; AMP from ADP: step 1/1. Its function is as follows. Catalyzes the reversible transfer of the terminal phosphate group between ATP and AMP. Plays an important role in cellular energy homeostasis and in adenine nucleotide metabolism. This is Adenylate kinase from Rhodococcus erythropolis (strain PR4 / NBRC 100887).